The chain runs to 101 residues: Large ribosomal subunit protein bL21 (101 aa).

It belongs to the bacterial ribosomal protein bL21 family. As to quaternary structure, part of the 50S ribosomal subunit. Contacts protein L20.

Its function is as follows. This protein binds to 23S rRNA in the presence of protein L20. The chain is Large ribosomal subunit protein bL21 from Sulfurovum sp. (strain NBC37-1).